The chain runs to 989 residues: R3H domain-containing protein 2 (989 aa).

Disordered regions lie at residues glutamate 23–asparagine 71 and serine 106–threonine 147. Positions proline 36–arginine 56 are enriched in basic and acidic residues. Serine 37 is modified (phosphoserine). Residues threonine 58 to asparagine 71 are compositionally biased toward basic residues. Residues serine 109–serine 143 are compositionally biased toward basic and acidic residues. Phosphoserine is present on serine 143. Positions arginine 169–threonine 232 constitute an R3H domain. The region spanning arginine 233–threonine 303 is the SUZ domain. 7 disordered regions span residues aspartate 267–glutamate 288, asparagine 306–proline 390, threonine 416–proline 479, alanine 493–glutamine 524, glycine 674–valine 738, arginine 751–asparagine 793, and glutamine 848–alanine 867. A compositionally biased stretch (basic and acidic residues) spans aspartate 277 to glutamate 288. The segment covering serine 320–aspartate 331 has biased composition (low complexity). Serine 344, serine 347, and serine 363 each carry phosphoserine. The segment covering threonine 416–proline 428 has biased composition (low complexity). Composition is skewed to polar residues over residues proline 454–threonine 466 and alanine 493–leucine 517. A compositionally biased stretch (pro residues) spans serine 695–methionine 704. Residues proline 705 to asparagine 727 show a composition bias toward low complexity. Over residues proline 761–methionine 771 the composition is skewed to polar residues. The span at serine 772 to serine 790 shows a compositional bias: low complexity. Phosphoserine occurs at positions 866 and 868. 2 positions are modified to phosphothreonine: threonine 869 and threonine 873.

The protein localises to the nucleus. In Bos taurus (Bovine), this protein is R3H domain-containing protein 2 (R3HDM2).